The sequence spans 144 residues: Acidic phospholipase A2 S15-109 (144 aa).

The first 19 residues, 1 to 19 (MYPAHLLVLLAVCVSLLGA), serve as a signal peptide directing secretion. The propeptide occupies 20-27 (SDIPPQPL). 7 cysteine pairs are disulfide-bonded: cysteine 38–cysteine 98, cysteine 54–cysteine 143, cysteine 56–cysteine 72, cysteine 71–cysteine 126, cysteine 78–cysteine 119, cysteine 87–cysteine 112, and cysteine 105–cysteine 117. Residues tyrosine 55, glycine 57, and glycine 59 each coordinate Ca(2+). The active site involves histidine 75. Position 76 (aspartate 76) interacts with Ca(2+). The active site involves aspartate 120.

Belongs to the phospholipase A2 family. Group I subfamily. D49 sub-subfamily. Ca(2+) serves as cofactor. In terms of tissue distribution, expressed by the venom gland.

The protein localises to the secreted. The catalysed reaction is a 1,2-diacyl-sn-glycero-3-phosphocholine + H2O = a 1-acyl-sn-glycero-3-phosphocholine + a fatty acid + H(+). Functionally, snake venom phospholipase A2 (PLA2) that inhibits collagen-induced platelet aggregation. PLA2 catalyzes the calcium-dependent hydrolysis of the 2-acyl groups in 3-sn-phosphoglycerides. The chain is Acidic phospholipase A2 S15-109 from Austrelaps superbus (Lowland copperhead snake).